Consider the following 71-residue polypeptide: Vitellogenin-A1 (71 aa).

Positions 1-15 are cleaved as a signal peptide; the sequence is MRGIILALLLAIAGS. Residues 24–71 form the Vitellogenin domain; that stretch reads FSESKTSVYNYEAVILNGFPESGLSRAGIKINCKVEISAYAQRSYFLK.

In terms of tissue distribution, produced by the liver, secreted into the blood and then sequestered by receptor mediated endocytosis into growing oocytes, where it is generally cleaved, giving rise to the respective yolk components.

Functionally, precursor of the major egg-yolk proteins that are sources of nutrients during early development of oviparous organisms. The sequence is that of Vitellogenin-A1 from Xenopus laevis (African clawed frog).